The sequence spans 138 residues: Flavodoxin (138 aa).

Residues 1-136 (MKIVYWSGTG…DCIEFGKKIA (136 aa)) enclose the Flavodoxin-like domain.

It belongs to the flavodoxin family. The cofactor is FMN.

Low-potential electron donor to a number of redox enzymes. The sequence is that of Flavodoxin from Clostridium beijerinckii (Clostridium MP).